The sequence spans 617 residues: DNA-(apurinic or apyrimidinic site) endonuclease (617 aa).

The interval 74–99 (IKNSDEQNNSNNNNNNSSSSNFCSNN) is disordered. Residues 81 to 99 (NNSNNNNNNSSSSNFCSNN) are compositionally biased toward low complexity. Positions 284 and 317 each coordinate Mg(2+). Residues 326–349 (SEPCDNKNKNKNKNDGIRDRGKIK) are disordered. Positions 329–349 (CDNKNKNKNKNDGIRDRGKIK) are enriched in basic and acidic residues. Positions 474, 476, 606, and 607 each coordinate Mg(2+). His-607 serves as the catalytic Proton acceptor.

This sequence belongs to the DNA repair enzymes AP/ExoA family. Mg(2+) serves as cofactor. Mn(2+) is required as a cofactor. Post-translationally, may be proteolytically cleaved into a 64 kDa form.

It localises to the mitochondrion. It catalyses the reaction Exonucleolytic cleavage in the 3'- to 5'-direction to yield nucleoside 5'-phosphates.. Apurinic/apyrimidinic (AP) endonuclease activity is maximal at low Mg(2+) (0.5-2 mM) with no activity seen at high concentrations (more than 10 mM). 3'-5' exonuclease activity is maximal in the range of 0.5-2 mM Mg(2+) with activity seen up to 10 mM Mg(2+). In terms of biological role, multifunctional protein that plays a central role in mitochondrial DNA base excision repair (BER) pathway induced by oxidative stress. Has apurinic/apyrimidinic (AP) endonuclease activity towards double-stranded DNA (dsDNA). Has nucleotide incision repair (NIR) activity; acts on dsDNA with oxidized bases thymine glycol and 5,6-dihydro-2'-deoxyuridine. Has 3'-5' exonuclease; can use dsDNA templates with 3'-OH termini including blunt-end, gapped and mismatched 3'-recessed. Has 3'-phosphatase activity; cleaves 3'-phosphate from blunt, recessed and gapped dsDNA templates, followed by 3'-5' exonuclease activity. Has RNase H-like activity; cleaves RNA on 3'-recessed RNA-DNA duplex. Plays a role in merosome infection of host erythrocytes. The polypeptide is DNA-(apurinic or apyrimidinic site) endonuclease (Plasmodium falciparum (isolate 3D7)).